Reading from the N-terminus, the 124-residue chain is Small ribosomal subunit protein eS25 (124 aa).

A compositionally biased stretch (basic and acidic residues) spans M1–V22. A disordered region spans residues M1–G37. Basic residues predominate over residues G27 to G37.

Belongs to the eukaryotic ribosomal protein eS25 family. As to quaternary structure, component of the small ribosomal subunit.

Its subcellular location is the cytoplasm. Its function is as follows. Component of the small ribosomal subunit. The ribosome is a large ribonucleoprotein complex responsible for the synthesis of proteins in the cell. In Ictalurus punctatus (Channel catfish), this protein is Small ribosomal subunit protein eS25 (rps25).